The primary structure comprises 784 residues: MASVISVLHGQVMQQDDEPPLAKRRRCREITFAGKSFYLDVPANRQTQLLTKAIGRLGGIIESFLSRDVDYVVTGSKKAVASVSSVATRRGEKSQIQAAERKEPIHCSRGKQLLKKVVHSQECNSVLTNARSWGVTVLYVEDVVSYIERLERPPSRGIQNKTAEGRAADSTRPSLKIARLRSPFIKIEDQSRKFRPLQCTFTSFPELSFVCSDKSPFETVQTVKKKDPGDQEEEEGQRSQKPQARKRKGYCECCEETFDTLSEHLVGEHHFRFVSNPLSYKMIDDLAAQLTCDLMELPFGSPTSPEAERSSQNEDWDLDLAPGEAEPAGNEGHELGILKATRLDKDGHADCEDQGAPAYLRDGGAEEPDQRCGEIPLANIEVDVYNVCSFDQPVVTCTMELPDVSAEGKIHSNLLGSTVGDERVLQRTNGTCEPHIDLALGNGRELKHAELQKDPLTKDSQPELLSTAHEQLPTSAPCMLLEGASVVHFPSHGGTVGSQGDVTSHSAANKPHTENCPVDSTGDRHAQPAGSDALAMSCVIPTLDNGGRHVDATMQSHWEVPLGCTTDTLLSYSTTVTVGELGPEAHNPTPEQQPLLISTCSSITTVCCTDTEFKSCTVSVHSTSHSPPNQNVKSNQTPSLLEMDLANPNCHRAKRKHWDSLLSPPGKKPTSPSHCQSLTLPMWLLCQFPNYGQQVQLPVWADLCKWDGTAAAEEGTVDCSSSSTLPKLHQDSFSSESDWDAHLPSFFQNNPQQSLQCGDLRTAQVTLNESWYGKQLCNILTHDP.

Positions 27 to 117 (CREITFAGKS…SRGKQLLKKV (91 aa)) constitute a BRCT domain. The interval 222–243 (TVKKKDPGDQEEEEGQRSQKPQ) is disordered. The DBF4-type zinc-finger motif lies at 244–293 (ARKRKGYCECCEETFDTLSEHLVGEHHFRFVSNPLSYKMIDDLAAQLTCD). Residues cysteine 251, cysteine 254, histidine 264, and histidine 270 each coordinate Zn(2+). 3 disordered regions span residues 299–332 (FGSP…GNEG), 348–368 (HADC…AEEP), and 495–529 (TVGS…AQPA). A compositionally biased stretch (polar residues) spans 498–507 (SQGDVTSHSA).

Forms a complex with cdc7. Post-translationally, phosphorylated. Stably phosphorylated throughout the cell cycle.

It localises to the nucleus. Functionally, regulatory subunit for cdc7 which activates its kinase activity thereby playing a central role in DNA replication and cell proliferation. Specifically required during the initiation of DNA replication in egg and during early embryonic development. The complex cdc7-dbf4b phosphorylates mcm2 and mcm4 subunits and is required for cdc45 loading. The polypeptide is Protein DBF4 homolog B (dbf4b) (Xenopus laevis (African clawed frog)).